A 573-amino-acid chain; its full sequence is Protein DSE1 (573 aa).

4 WD repeats span residues 144–185 (DFPP…GCAK), 315–351 (RKNT…GKPV), 356–395 (AKKG…NMKY), and 397–448 (ELVH…NGKG). Residues 500-509 (SDSSMLSLSN) show a composition bias toward low complexity. The disordered stretch occupies residues 500–519 (SDSSMLSLSNESDHSMTETS). Residue lysine 553 forms a Glycyl lysine isopeptide (Lys-Gly) (interchain with G-Cter in ubiquitin) linkage.

The protein belongs to the WD repeat DSE1 family.

It localises to the bud neck. Involved in cell wall metabolism and required for the separation of the mother and daughter cells. This is Protein DSE1 (DSE1) from Saccharomyces cerevisiae (strain ATCC 204508 / S288c) (Baker's yeast).